Reading from the N-terminus, the 543-residue chain is Kelch repeat and BTB domain-containing protein 4 (543 aa).

Positions 70-137 (ADVTISVEGR…IYHGTVKLRA (68 aa)) constitute a BTB domain. Residues 172-264 (CLQVMWLADR…SLKEIGENVH (93 aa)) enclose the BACK domain. Kelch repeat units lie at residues 264–310 (HIYL…KHGG), 311–353 (DLYV…SVPG), 356–403 (AIYS…NLNG), 405–455 (IYLL…VHKD), and 457–505 (VFIV…YVFR).

As to quaternary structure, component of the BCR(KBTBD4) E3 ubiquitin ligase complex, at least composed of CUL3, KBTBD4 and RBX1.

Its function is as follows. Substrate-specific adapter of a BCR (BTB-CUL3-RBX1) E3 ubiquitin ligase complex which targets CoREST corepressor complex components RCOR1, KDM1A/LSD1 and HDAC2 for proteasomal degradation. RCOR1 is likely to be the primary target while degradation of KDM1A and HDAC2 is likely due to their association with RCOR1. Also targets RCOR3, MIER2 and MIER3 for proteasomal degradation as well as associated proteins ZNF217 and RREB1. Degradation is dependent on the presence of an ELM2 domain in the target proteins. This Macaca fascicularis (Crab-eating macaque) protein is Kelch repeat and BTB domain-containing protein 4 (KBTBD4).